The sequence spans 246 residues: UDP-N-acetyl-D-mannosaminuronic acid transferase (246 aa).

The protein belongs to the glycosyltransferase 26 family.

The catalysed reaction is UDP-N-acetyl-alpha-D-mannosaminouronate + N-acetyl-alpha-D-glucosaminyl-di-trans,octa-cis-undecaprenyl diphosphate = beta-D-ManNAcA-(1-&gt;4)-alpha-D-GlcNAc-di-trans,octa-cis-undecaprenyl diphosphate + UDP + H(+). It participates in bacterial outer membrane biogenesis; enterobacterial common antigen biosynthesis. In terms of biological role, catalyzes the synthesis of Und-PP-GlcNAc-ManNAcA (Lipid II), the second lipid-linked intermediate involved in enterobacterial common antigen (ECA) synthesis. The protein is UDP-N-acetyl-D-mannosaminuronic acid transferase of Escherichia coli O7:K1 (strain IAI39 / ExPEC).